The following is a 341-amino-acid chain: Spindolin (341 aa).

Residues 1 to 20 (MNKLILISLIASLYQVEVDA) form the signal peptide.

In terms of assembly, homodimer; disulfide-linked.

Functionally, this protein is a spindle body protein. The protein is Spindolin (SPH) of Choristoneura biennis entomopoxvirus (CbEPV).